The primary structure comprises 889 residues: MAQGDPGGQTPQAPQGTDKKPDEPKATEKPQGAGPQPRDPPGGEKGLRDPPGGEKGPRDPGQGGAGEALAEALYGLGRPVLRAVLYLFPVYLCGRFGLSPTWLLFGLFLWMFWTRNKKFKLARIQAAWDLHENEKLGVTRGLYLQQLPAWVNFPDVERVEWLNKVVGQMWPYIGMYVEKMFQDKVEPLVRSSSAHLKAFTFTKVHLGEKFPRINGVKSYTKNVDKREVILDLQLSYNGDVEINVEVKKMCKAGVKGVQLHGTLRVILAPLLPDLPFVGAVTMFFIQRPHLDINWTGLTNVLEIPGVSDFSDSMIVDMIASHLVLPNRFTVPLSSQVQAAQLRFPLPHGVLRLHLIEAEDLIPKDNYLKGIIRGKSDPYAVLRIGNQNFKSRTIKENLNPKWGEMYEFVVHEVPGQDLEVDLYDEDPDKDDFLGSLVIGLEGVMQDRVVDEWFPLSDVPSGSVHLRLEWLSLLPKSEKLSEAKGGISTAMLIVYLDSASALPRNHFEYSSSEYTTRKQRHMTYTKTDKDPNSYVLMSVGKKSVKSKTCTGSTEPVWGQAFAFFIQDVHMQHLHLEVKDSERQCALGMLDLPLHRLLGNEELTADQRFPLANSGPNSTIKMKIVLRVLHVEAPEPESIYTGINSLKQGPVSIKRAQSQQHKSHGKSHQAHHQAHQTQQNHTVQQPKAERKESISTTSQQANTSSSNPAPNQNPNSTGAVPESHTPSLKPLERIAPSLLSLNSIGSSVFDPNDKRWPSEMTGEVEVSVRYASLRRCLVVLINSCRNLIQCSSNGADPYVRIYLLPDRKWSGRKKTSVKRKTLNPQYNERFEFLVSQEEAKKRMLDVAVKNNRGFGSHERKELGKVLVDLSCDDLVKGFTKWFELTPTGLPTS.

Residues 1-65 (MAQGDPGGQT…GPRDPGQGGA (65 aa)) are disordered. Residues 1–66 (MAQGDPGGQT…PRDPGQGGAG (66 aa)) are Cytoplasmic-facing. Basic and acidic residues-rich tracts occupy residues 17–28 (TDKKPDEPKATE) and 41–58 (PGGE…KGPR). The next 2 membrane-spanning stretches (helical) occupy residues 67–91 (EALA…FPVY) and 92–112 (LCGR…LWMF). Residues 113–889 (WTRNKKFKLA…ELTPTGLPTS (777 aa)) are Cytoplasmic-facing. An SMP-LTD domain is found at 155-333 (DVERVEWLNK…LPNRFTVPLS (179 aa)). 2 C2 domains span residues 331–452 (PLSS…DEWF) and 468–618 (WLSL…STIK). Ca(2+)-binding residues include Lys363, Asp364, Asp376, Asp423, Glu424, Asp425, Asp427, Asp429, and Asp430. The tract at residues 649-724 (SIKRAQSQQH…GAVPESHTPS (76 aa)) is disordered. The segment covering 658-671 (HKSHGKSHQAHHQA) has biased composition (basic residues). Low complexity-rich tracts occupy residues 672–682 (HQTQQNHTVQQ) and 691–714 (ISTT…PNST). Residues 757 to 879 (MTGEVEVSVR…DLVKGFTKWF (123 aa)) enclose the C2 3 domain. The required for phosphatidylinositol 4,5-bisphosphate-dependent location at the cell membrane stretch occupies residues 804-811 (RKWSGRKK).

It belongs to the extended synaptotagmin family.

Its subcellular location is the cell membrane. The protein localises to the endoplasmic reticulum membrane. In terms of biological role, tethers the endoplasmic reticulum to the cell membrane and promotes the formation of appositions between the endoplasmic reticulum and the cell membrane. Binds glycerophospholipids in a barrel-like domain and may play a role in cellular lipid transport. This is Extended synaptotagmin-3 (esyt3) from Xenopus tropicalis (Western clawed frog).